The primary structure comprises 287 residues: ATP synthase gamma chain (287 aa).

Belongs to the ATPase gamma chain family. F-type ATPases have 2 components, CF(1) - the catalytic core - and CF(0) - the membrane proton channel. CF(1) has five subunits: alpha(3), beta(3), gamma(1), delta(1), epsilon(1). CF(0) has three main subunits: a, b and c.

It localises to the cell inner membrane. Functionally, produces ATP from ADP in the presence of a proton gradient across the membrane. The gamma chain is believed to be important in regulating ATPase activity and the flow of protons through the CF(0) complex. The polypeptide is ATP synthase gamma chain (Geotalea uraniireducens (strain Rf4) (Geobacter uraniireducens)).